A 476-amino-acid polypeptide reads, in one-letter code: Ribulose bisphosphate carboxylase large chain (476 aa).

Positions 1–2 (MS) are excised as a propeptide. N-acetylproline is present on Pro3. Lys14 carries the N6,N6,N6-trimethyllysine modification. Substrate contacts are provided by Asn123 and Thr173. Lys175 functions as the Proton acceptor in the catalytic mechanism. Residue Lys177 participates in substrate binding. Residues Lys201, Asp203, and Glu204 each contribute to the Mg(2+) site. The residue at position 201 (Lys201) is an N6-carboxylysine. Catalysis depends on His294, which acts as the Proton acceptor. Arg295, His327, and Ser379 together coordinate substrate.

The protein belongs to the RuBisCO large chain family. Type I subfamily. In terms of assembly, heterohexadecamer of 8 large chains and 8 small chains; disulfide-linked. The disulfide link is formed within the large subunit homodimers. Mg(2+) serves as cofactor. In terms of processing, the disulfide bond which can form in the large chain dimeric partners within the hexadecamer appears to be associated with oxidative stress and protein turnover.

It is found in the plastid. The protein localises to the chloroplast. The enzyme catalyses 2 (2R)-3-phosphoglycerate + 2 H(+) = D-ribulose 1,5-bisphosphate + CO2 + H2O. It carries out the reaction D-ribulose 1,5-bisphosphate + O2 = 2-phosphoglycolate + (2R)-3-phosphoglycerate + 2 H(+). RuBisCO catalyzes two reactions: the carboxylation of D-ribulose 1,5-bisphosphate, the primary event in carbon dioxide fixation, as well as the oxidative fragmentation of the pentose substrate in the photorespiration process. Both reactions occur simultaneously and in competition at the same active site. This chain is Ribulose bisphosphate carboxylase large chain, found in Liriodendron tulipifera (Tuliptree).